The chain runs to 438 residues: MDAHITPSTVNGTVRAPPSKSYTHRAILAAGYGDGATVKNPLFSADTRATARAVEAYGGTTEQADDDLEVTGFDGTPGTPKDVINCANSGTTMRLTTATGALVDGLAVLTGDESLRSRPQGPLLDALDQLGARAESTRENGQAPLVVGGDIDGGELAIRGDVSSQYITGLLMAGAVTESGIDIELTTALKSAPYVDITLEVLADFGVDAEVIGGDDSEVRSAGADGFRVDGGQSYAPTDGTYHVPGDFSSMSYLLAAGALAADEEVVVAGAHPSAQGDAAIVSILESMGADIEWNRDDGRITVRQSSLSGVEVGVADTPDLLPTIAVLGAAADGETRITDCEHVRLKETDRVAAMATELERLGVETDEYEDELVVYGGGIDGGTVAGHDDHRIVMSLAVAGLVADGEVTIKNADHVDVSFPSFFETLADLGVGVETGA.

Lys-20, Ser-21, and Arg-25 together coordinate 3-phosphoshikimate. Position 20 (Lys-20) interacts with phosphoenolpyruvate. Residues Gly-90 and Arg-118 each contribute to the phosphoenolpyruvate site. 3-phosphoshikimate contacts are provided by Ser-163, Ser-164, Gln-165, Ser-191, Asp-320, and Lys-347. Gln-165 is a binding site for phosphoenolpyruvate. Asp-320 serves as the catalytic Proton acceptor. Phosphoenolpyruvate-binding residues include Arg-351 and Arg-392.

The protein belongs to the EPSP synthase family. As to quaternary structure, monomer.

The protein resides in the cytoplasm. It catalyses the reaction 3-phosphoshikimate + phosphoenolpyruvate = 5-O-(1-carboxyvinyl)-3-phosphoshikimate + phosphate. It functions in the pathway metabolic intermediate biosynthesis; chorismate biosynthesis. In terms of biological role, catalyzes the transfer of the enolpyruvyl moiety of phosphoenolpyruvate (PEP) to the 5-hydroxyl of shikimate-3-phosphate (S3P) to produce enolpyruvyl shikimate-3-phosphate and inorganic phosphate. The sequence is that of 3-phosphoshikimate 1-carboxyvinyltransferase from Natronomonas pharaonis (strain ATCC 35678 / DSM 2160 / CIP 103997 / JCM 8858 / NBRC 14720 / NCIMB 2260 / Gabara) (Halobacterium pharaonis).